A 149-amino-acid polypeptide reads, in one-letter code: Large ribosomal subunit protein bL9 (149 aa).

Belongs to the bacterial ribosomal protein bL9 family.

Functionally, binds to the 23S rRNA. The protein is Large ribosomal subunit protein bL9 of Sulfurihydrogenibium sp. (strain YO3AOP1).